The sequence spans 179 residues: Large ribosomal subunit protein uL6 (179 aa).

It belongs to the universal ribosomal protein uL6 family. In terms of assembly, part of the 50S ribosomal subunit.

In terms of biological role, this protein binds to the 23S rRNA, and is important in its secondary structure. It is located near the subunit interface in the base of the L7/L12 stalk, and near the tRNA binding site of the peptidyltransferase center. The protein is Large ribosomal subunit protein uL6 of Leptospira interrogans serogroup Icterohaemorrhagiae serovar copenhageni (strain Fiocruz L1-130).